Here is a 518-residue protein sequence, read N- to C-terminus: Bifunctional purine biosynthesis protein PurH (518 aa).

Positions 1-146 (MSPIALLSVS…KNHQDVLVVT (146 aa)) constitute an MGS-like domain.

This sequence belongs to the PurH family.

It catalyses the reaction (6R)-10-formyltetrahydrofolate + 5-amino-1-(5-phospho-beta-D-ribosyl)imidazole-4-carboxamide = 5-formamido-1-(5-phospho-D-ribosyl)imidazole-4-carboxamide + (6S)-5,6,7,8-tetrahydrofolate. The catalysed reaction is IMP + H2O = 5-formamido-1-(5-phospho-D-ribosyl)imidazole-4-carboxamide. Its pathway is purine metabolism; IMP biosynthesis via de novo pathway; 5-formamido-1-(5-phospho-D-ribosyl)imidazole-4-carboxamide from 5-amino-1-(5-phospho-D-ribosyl)imidazole-4-carboxamide (10-formyl THF route): step 1/1. It participates in purine metabolism; IMP biosynthesis via de novo pathway; IMP from 5-formamido-1-(5-phospho-D-ribosyl)imidazole-4-carboxamide: step 1/1. The sequence is that of Bifunctional purine biosynthesis protein PurH from Prochlorococcus marinus (strain NATL2A).